The sequence spans 547 residues: DNA ligase (547 aa).

Glu-244 is a binding site for ATP. The active-site N6-AMP-lysine intermediate is Lys-246. ATP is bound by residues Arg-251, Arg-266, Glu-295, Phe-334, Arg-405, and Lys-411.

This sequence belongs to the ATP-dependent DNA ligase family. The cofactor is Mg(2+).

The catalysed reaction is ATP + (deoxyribonucleotide)n-3'-hydroxyl + 5'-phospho-(deoxyribonucleotide)m = (deoxyribonucleotide)n+m + AMP + diphosphate.. DNA ligase that seals nicks in double-stranded DNA during DNA replication, DNA recombination and DNA repair. The chain is DNA ligase from Methanospirillum hungatei JF-1 (strain ATCC 27890 / DSM 864 / NBRC 100397 / JF-1).